The sequence spans 382 residues: Dual-specificity RNA methyltransferase RlmN (382 aa).

Glu96 (proton acceptor) is an active-site residue. Residues 102 to 342 form the Radical SAM core domain; sequence QGKRGTLCVS…VRTTRGEDID (241 aa). Cysteines 109 and 345 form a disulfide. [4Fe-4S] cluster contacts are provided by Cys116, Cys120, and Cys123. S-adenosyl-L-methionine-binding positions include 170–171, Ser202, 224–226, and Asn302; these read GE and SLH. Cys345 acts as the S-methylcysteine intermediate in catalysis.

It belongs to the radical SAM superfamily. RlmN family. [4Fe-4S] cluster is required as a cofactor.

Its subcellular location is the cytoplasm. It catalyses the reaction adenosine(2503) in 23S rRNA + 2 reduced [2Fe-2S]-[ferredoxin] + 2 S-adenosyl-L-methionine = 2-methyladenosine(2503) in 23S rRNA + 5'-deoxyadenosine + L-methionine + 2 oxidized [2Fe-2S]-[ferredoxin] + S-adenosyl-L-homocysteine. The catalysed reaction is adenosine(37) in tRNA + 2 reduced [2Fe-2S]-[ferredoxin] + 2 S-adenosyl-L-methionine = 2-methyladenosine(37) in tRNA + 5'-deoxyadenosine + L-methionine + 2 oxidized [2Fe-2S]-[ferredoxin] + S-adenosyl-L-homocysteine. Specifically methylates position 2 of adenine 2503 in 23S rRNA and position 2 of adenine 37 in tRNAs. m2A2503 modification seems to play a crucial role in the proofreading step occurring at the peptidyl transferase center and thus would serve to optimize ribosomal fidelity. In Pseudomonas syringae pv. tomato (strain ATCC BAA-871 / DC3000), this protein is Dual-specificity RNA methyltransferase RlmN.